A 493-amino-acid polypeptide reads, in one-letter code: Transcript termination protein A18 (493 aa).

Positions Met-100 to Ser-256 constitute a Helicase ATP-binding domain. Position 113 to 120 (Leu-113 to Thr-120) interacts with ATP. The DESH box motif lies at Asp-206–His-209.

This sequence belongs to the helicase family. Poxviruses subfamily. In terms of assembly, interacts with G2. Might be part of a transcription complex composed at least of G2, A18, and H5.

The protein resides in the virion. Its function is as follows. DNA helicase which seems to act as a postreplicative transcription termination factor. Involved in ATP-dependent release of nascent RNA. Forms a stable complex with single-stranded DNA, and to a lesser extent RNA. The protein is Transcript termination protein A18 of Rabbitpox virus (strain Utrecht) (RPV).